The sequence spans 180 residues: NADH-quinone oxidoreductase subunit I (180 aa).

4Fe-4S ferredoxin-type domains lie at 50-80 and 90-119; these read LTRDPDGEERCVACNLCAVACPVGCISLQKA and EFFRINFSRCIFCGLCEEACPTTAIQLTPD. C60, C63, C66, C70, C99, C102, C105, and C109 together coordinate [4Fe-4S] cluster.

This sequence belongs to the complex I 23 kDa subunit family. In terms of assembly, NDH-1 is composed of 13 different subunits. Subunits NuoA, H, J, K, L, M, N constitute the membrane sector of the complex. [4Fe-4S] cluster serves as cofactor.

The protein resides in the cell inner membrane. It catalyses the reaction a quinone + NADH + 5 H(+)(in) = a quinol + NAD(+) + 4 H(+)(out). Its function is as follows. NDH-1 shuttles electrons from NADH, via FMN and iron-sulfur (Fe-S) centers, to quinones in the respiratory chain. The immediate electron acceptor for the enzyme in this species is believed to be ubiquinone. Couples the redox reaction to proton translocation (for every two electrons transferred, four hydrogen ions are translocated across the cytoplasmic membrane), and thus conserves the redox energy in a proton gradient. This chain is NADH-quinone oxidoreductase subunit I, found in Salmonella choleraesuis (strain SC-B67).